A 92-amino-acid polypeptide reads, in one-letter code: uncharacterized protein (92 aa).

The helical transmembrane segment at 65–86 threads the bilayer; that stretch reads AVWIFWLCFLVSGLSRAFLVYF.

The protein resides in the membrane. This is an uncharacterized protein from Treponema pallidum (strain Nichols).